The chain runs to 435 residues: Adenylosuccinate synthetase (435 aa).

Residues 17 to 23 (GDEGKGK) and 45 to 47 (GHT) each bind GTP. Aspartate 18 (proton acceptor) is an active-site residue. Mg(2+) is bound by residues aspartate 18 and glycine 45. Residues 18–21 (DEGK), 43–46 (NAGH), threonine 134, arginine 148, glutamine 229, threonine 244, and arginine 308 each bind IMP. Histidine 46 acts as the Proton donor in catalysis. Position 304–310 (304–310 (SVTGRPR)) interacts with substrate. GTP-binding positions include arginine 310, 336 to 338 (KLD), and 418 to 420 (STG).

Belongs to the adenylosuccinate synthetase family. As to quaternary structure, homodimer. Requires Mg(2+) as cofactor.

Its subcellular location is the cytoplasm. The catalysed reaction is IMP + L-aspartate + GTP = N(6)-(1,2-dicarboxyethyl)-AMP + GDP + phosphate + 2 H(+). It participates in purine metabolism; AMP biosynthesis via de novo pathway; AMP from IMP: step 1/2. Plays an important role in the de novo pathway of purine nucleotide biosynthesis. Catalyzes the first committed step in the biosynthesis of AMP from IMP. The chain is Adenylosuccinate synthetase from Bordetella parapertussis (strain 12822 / ATCC BAA-587 / NCTC 13253).